The chain runs to 295 residues: Calcium-regulated actin-bundling protein (295 aa).

Monomer.

May contribute to the structure and reorganization of filopodia and pseudopodia accompanying cell movements. The protein is Calcium-regulated actin-bundling protein (abpB) of Dictyostelium discoideum (Social amoeba).